We begin with the raw amino-acid sequence, 720 residues long: Serine/threonine-protein kinase KIN82 (720 aa).

2 stretches are compositionally biased toward polar residues: residues 1 to 13 (MTQQEYRSPSQRL) and 99 to 116 (FNHNRSKSSGTTDASTSE). Disordered regions lie at residues 1–20 (MTQQEYRSPSQRLSKGRSMS) and 99–128 (FNHNRSKSSGTTDASTSEKGTHKREPRSTI). The residue at position 203 (S203) is a Phosphoserine. A compositionally biased stretch (low complexity) spans 230–241 (SPLANLSLSNSP). Residues 230–257 (SPLANLSLSNSPIDSPRKNSETRKDQIP) are disordered. Positions 244-255 (SPRKNSETRKDQ) are enriched in basic and acidic residues. The region spanning 324-602 (FEKIRLLGQG…AADIKRHPFF (279 aa)) is the Protein kinase domain. ATP is bound by residues 330–338 (LGQGDVGKV) and K353. D449 serves as the catalytic Proton acceptor.

It belongs to the protein kinase superfamily. Ser/Thr protein kinase family. KIN82 subfamily.

It catalyses the reaction L-seryl-[protein] + ATP = O-phospho-L-seryl-[protein] + ADP + H(+). The catalysed reaction is L-threonyl-[protein] + ATP = O-phospho-L-threonyl-[protein] + ADP + H(+). Its function is as follows. Flippase activator that phosphorylates DFN1 and DFN2 and which is involved in the generation of phospholipid asymmetry in membranes by the inward translocation of phospholipids. This chain is Serine/threonine-protein kinase KIN82 (KIN82), found in Saccharomyces cerevisiae (strain ATCC 204508 / S288c) (Baker's yeast).